A 192-amino-acid polypeptide reads, in one-letter code: Ion-translocating oxidoreductase complex subunit A (192 aa).

Transmembrane regions (helical) follow at residues 5-25 (ALIL…FLGL), 39-59 (TGMG…SYLV), 65-85 (APLG…AAVV), 102-122 (VLGI…VALL), 134-154 (ALYG…FASI), and 171-191 (AIAL…IGLV).

This sequence belongs to the NqrDE/RnfAE family. In terms of assembly, the complex is composed of six subunits: RnfA, RnfB, RnfC, RnfD, RnfE and RnfG.

The protein localises to the cell inner membrane. Functionally, part of a membrane-bound complex that couples electron transfer with translocation of ions across the membrane. The polypeptide is Ion-translocating oxidoreductase complex subunit A (Thioalkalivibrio sulfidiphilus (strain HL-EbGR7)).